A 388-amino-acid polypeptide reads, in one-letter code: LL-diaminopimelate aminotransferase (388 aa).

Residues Tyr-13, Gly-38, Lys-102, Tyr-126, and Asn-176 each contribute to the substrate site. Pyridoxal 5'-phosphate contacts are provided by residues Ser-101–Lys-102, Tyr-126, Asn-176, Tyr-207, and Ser-235–Ser-237. Lys-238 carries the post-translational modification N6-(pyridoxal phosphate)lysine. Arg-246 is a pyridoxal 5'-phosphate binding site. Arg-364 lines the substrate pocket.

It belongs to the class-I pyridoxal-phosphate-dependent aminotransferase family. LL-diaminopimelate aminotransferase subfamily. In terms of assembly, homodimer. Pyridoxal 5'-phosphate is required as a cofactor.

The catalysed reaction is (2S,6S)-2,6-diaminopimelate + 2-oxoglutarate = (S)-2,3,4,5-tetrahydrodipicolinate + L-glutamate + H2O + H(+). It functions in the pathway amino-acid biosynthesis; L-lysine biosynthesis via DAP pathway; LL-2,6-diaminopimelate from (S)-tetrahydrodipicolinate (aminotransferase route): step 1/1. Its function is as follows. Involved in the synthesis of meso-diaminopimelate (m-DAP or DL-DAP), required for both lysine and peptidoglycan biosynthesis. Catalyzes the direct conversion of tetrahydrodipicolinate to LL-diaminopimelate. This chain is LL-diaminopimelate aminotransferase, found in Dehalococcoides mccartyi (strain CBDB1).